The primary structure comprises 1138 residues: Eukaryotic translation initiation factor 3 subunit A (1138 aa).

The PCI domain occupies 319 to 502 (LQRMAAHVLL…NSIYFGTDLT (184 aa)). 2 disordered regions span residues 590 to 633 (NNAR…NEIQ) and 817 to 1138 (ERFR…VKRR). 4 stretches are compositionally biased toward basic and acidic residues: residues 817–903 (ERFR…RVER), 923–967 (DRNE…KEND), 1003–1049 (GRDD…DQPQ), and 1058–1078 (DSPR…RDVR). Residues 1082–1100 (PKEGGGGVSGGGAGGGGGN) show a composition bias toward gly residues. Positions 1107 to 1128 (PREEKAPPKREQAQDKENKAGD) are enriched in basic and acidic residues.

This sequence belongs to the eIF-3 subunit A family. As to quaternary structure, component of the eukaryotic translation initiation factor 3 (eIF-3) complex. The eIF-3 complex interacts with pix.

Its subcellular location is the cytoplasm. Functionally, RNA-binding component of the eukaryotic translation initiation factor 3 (eIF-3) complex, which is involved in protein synthesis of a specialized repertoire of mRNAs and, together with other initiation factors, stimulates binding of mRNA and methionyl-tRNAi to the 40S ribosome. The eIF-3 complex specifically targets and initiates translation of a subset of mRNAs involved in cell proliferation. The protein is Eukaryotic translation initiation factor 3 subunit A of Drosophila virilis (Fruit fly).